A 245-amino-acid chain; its full sequence is TPR repeat-containing protein PA4299 (245 aa).

The first 16 residues, 1–16 (MKALIGIGLCAALLGG), serve as a signal peptide directing secretion. Cys17 carries the N-palmitoyl cysteine lipid modification. Cys17 is lipidated: S-diacylglycerol cysteine. 3 TPR repeats span residues 100–133 (PEAHHGLGLLALRNGDSARAVLELREAARLRPTE), 135–167 (RFRNDLGVALLKRGDRVGARFEFITALELQQGG), and 169–200 (LPATNLLGLLYLQGDREDAQRLIERLQLDARD). A disordered region spans residues 210–245 (SWGAVPTPGAAPASDDPLAELPAEANMHTAMANEAP).

Its subcellular location is the cell membrane. The sequence is that of TPR repeat-containing protein PA4299 from Pseudomonas aeruginosa (strain ATCC 15692 / DSM 22644 / CIP 104116 / JCM 14847 / LMG 12228 / 1C / PRS 101 / PAO1).